The sequence spans 99 residues: A-type ATP synthase subunit F (99 aa).

It belongs to the V-ATPase F subunit family. Has multiple subunits with at least A(3), B(3), C, D, E, F, H, I and proteolipid K(x).

The protein localises to the cell membrane. Its function is as follows. Component of the A-type ATP synthase that produces ATP from ADP in the presence of a proton gradient across the membrane. This chain is A-type ATP synthase subunit F, found in Methanothrix thermoacetophila (strain DSM 6194 / JCM 14653 / NBRC 101360 / PT) (Methanosaeta thermophila).